A 408-amino-acid polypeptide reads, in one-letter code: Imidazolonepropionase (408 aa).

Histidine 73 and histidine 75 together coordinate Fe(3+). Zn(2+) contacts are provided by histidine 73 and histidine 75. 4-imidazolone-5-propanoate is bound by residues arginine 82, tyrosine 145, and histidine 178. Tyrosine 145 contacts N-formimidoyl-L-glutamate. A Fe(3+)-binding site is contributed by histidine 243. Residue histidine 243 coordinates Zn(2+). Position 246 (glutamine 246) interacts with 4-imidazolone-5-propanoate. Aspartate 318 is a Fe(3+) binding site. Aspartate 318 contributes to the Zn(2+) binding site. Residues asparagine 320 and glycine 322 each coordinate N-formimidoyl-L-glutamate. Serine 323 is a 4-imidazolone-5-propanoate binding site.

This sequence belongs to the metallo-dependent hydrolases superfamily. HutI family. Zn(2+) is required as a cofactor. Requires Fe(3+) as cofactor.

It localises to the cytoplasm. It carries out the reaction 4-imidazolone-5-propanoate + H2O = N-formimidoyl-L-glutamate. The protein operates within amino-acid degradation; L-histidine degradation into L-glutamate; N-formimidoyl-L-glutamate from L-histidine: step 3/3. Catalyzes the hydrolytic cleavage of the carbon-nitrogen bond in imidazolone-5-propanoate to yield N-formimidoyl-L-glutamate. It is the third step in the universal histidine degradation pathway. This is Imidazolonepropionase from Shewanella woodyi (strain ATCC 51908 / MS32).